The chain runs to 131 residues: Small ribosomal subunit protein uS8 (131 aa).

The protein belongs to the universal ribosomal protein uS8 family. As to quaternary structure, part of the 30S ribosomal subunit. Contacts proteins S5 and S12.

One of the primary rRNA binding proteins, it binds directly to 16S rRNA central domain where it helps coordinate assembly of the platform of the 30S subunit. In Bacteroides fragilis (strain ATCC 25285 / DSM 2151 / CCUG 4856 / JCM 11019 / LMG 10263 / NCTC 9343 / Onslow / VPI 2553 / EN-2), this protein is Small ribosomal subunit protein uS8.